The primary structure comprises 1077 residues: TSC22 domain family protein 1 (1077 aa).

The tract at residues 1 to 98 is required for interaction with TGFBR1 and promotion of TGF-beta signaling; sequence MHQPPESTAA…SQAQLQGQPL (98 aa). Disordered stretches follow at residues 22–112, 125–283, 458–492, 842–874, and 909–947; these read MAHP…SGFQ, ISSN…VPSS, QTPT…SVGS, SSAA…GSLV, and QAIG…SDGS. The segment covering 58 to 70 has biased composition (pro residues); it reads FPPPSLLQPPPPA. Positions 84-96 are enriched in low complexity; the sequence is SLNLLSQAQLQGQ. Residues 133–142 are compositionally biased toward acidic residues; the sequence is EDTESYDDLD. The segment covering 216–240 has biased composition (basic residues); it reads HPHHLHHHHHPHHGHHLHHGHHHSS. Residue serine 263 is modified to Phosphoserine. The segment covering 471-489 has biased composition (low complexity); that stretch reads TSGSSVSSSVSTLSHYTES. The span at 852–874 shows a compositional bias: polar residues; sequence VPTNLVPPQNIAQPPATQNGSLV. A compositionally biased stretch (low complexity) spans 933–947; the sequence is MSGDSGGMSAVSDGS. The tract at residues 1010–1031 is leucine-zipper; sequence LKEQIKELIEKNSQLEQENNLL. The disordered stretch occupies residues 1042–1077; it reads QFQAQLQTGSPPATTQPQGTTQPPAQPASQGSGSTA. Residues 1048–1077 are compositionally biased toward low complexity; the sequence is QTGSPPATTQPQGTTQPPAQPASQGSGSTA.

The protein belongs to the TSC-22/Dip/Bun family. In terms of assembly, forms homodimers. Forms heterodimers. Component of a complex composed of TSC22D1 (via N-terminus), TGFBR1 and TGFBR2; the interaction between TSC22D1 and TGFBR1 is inhibited by SMAD7 and promoted by TGFB1. Interacts with SMAD7; the interaction requires TGF-beta and the interaction is inhibited by TGFBR1. Interacts with TPT1/fortilin; interaction results in the destabilization of TSC22D1 protein and prevents TSC22D1-mediated apoptosis. Interacts with SMAD4 (via N-terminus). Interacts with ACVRL1/ALK1, ACVR1/ALK2, BMPR1A/ALK3, ACVR1B/ALK4, BMPR1B/ALK6, ACVR2A/ACTRII, and BMPR2. Interacts with SMAD6. Interacts with TFE3; the interaction is enhanced in the presence of TGF-beta. As to quaternary structure, forms a heterodimer with TSC22D4/THG1. Forms a heterodimer with TSC22D4/THG1. Interacts with histone H1-2. Interacts with GNL3. In terms of tissue distribution, expressed in bone marrow cells (at protein level). Expressed in T-cells. Expressed in the brain. As to expression, expressed in the myoepithelial cells of the mammary gland ducts and alveoli, expression is consistent throughout pregnancy, lactation and involution (at protein level). Expressed in the cortex, medulla and papilla of the kidney. Expressed in the myoepithelial cells of the mammary gland, expression significantly increases in the secretory luminal epithelium of the mammary gland at the initiation of involution, with levels decreasing from day 3 of involution onwards (at protein level). Expressed in the cortex, medulla and papilla of the kidney.

It is found in the cytoplasm. Its subcellular location is the nucleus. The protein localises to the cell membrane. It localises to the mitochondrion. Functionally, transcriptional repressor. Acts on the C-type natriuretic peptide (CNP) promoter. Acts to promote CASP3-mediated apoptosis. Positively regulates TGF-beta signaling by interacting with SMAD7 which inhibits binding of SMAD7 to TGFBR1, preventing recruitment of SMURF ubiquitin ligases to TGFBR1 and inhibiting SMURF-mediated ubiquitination and degradation of TGFBR1. Contributes to enhancement of TGF-beta signaling by binding to and modulating the transcription activator activity of SMAD4. Promotes TGF-beta-induced transcription of COL1A2; via its interaction with TFE3 at E-boxes in the gene proximal promoter. Plays a role in the repression of hematopoietic precursor cell growth. Promotes IL2 deprivation-induced apoptosis in T-lymphocytes, via repression of TSC22D3/GILZ transcription and activation of the caspase cascade. May act to negatively regulate TGFB3 signaling and thereby inhibit cell death in mammary gland cells. Its function is as follows. Positively regulates cell death in response to TGFB3 during mammary gland involution. The sequence is that of TSC22 domain family protein 1 from Mus musculus (Mouse).